We begin with the raw amino-acid sequence, 336 residues long: Glucokinase (336 aa).

ATP is bound at residue 12 to 17; sequence ADIGGT.

Belongs to the bacterial glucokinase family.

The protein localises to the cytoplasm. It carries out the reaction D-glucose + ATP = D-glucose 6-phosphate + ADP + H(+). The protein is Glucokinase of Helicobacter pylori (strain ATCC 700392 / 26695) (Campylobacter pylori).